The sequence spans 236 residues: MKKPLLLTLLCMILAGCDNPKSLESFTPEMASFSNEFDFDPLRGPVKDFSQTLMSENGEVAKQVTGTLSQEGCFDTLELHDLENNTELALVLDANYYRDAQTLEKKVQLQGKCQLAALPSAGVTWETDDNGFVVSATGKEMKVEYRYDSEGYPLGKTTINSQNTLSVTAKPSADPRKKLDYTAVSRVDDRQVGNVTLSCEYDAYANPVDCRLVIVDESVKPAVSHHYTIKNRIDYY.

Positions 1–16 are cleaved as a signal peptide; the sequence is MKKPLLLTLLCMILAG. A lipid anchor (N-palmitoyl cysteine) is attached at cysteine 17. Residue cysteine 17 is the site of S-diacylglycerol cysteine attachment.

This sequence belongs to the UPF0257 family.

The protein resides in the cell membrane. The protein is UPF0257 lipoprotein YnfC of Salmonella paratyphi C (strain RKS4594).